The following is a 407-amino-acid chain: RING-H2 finger protein ATL43 (407 aa).

The signal sequence occupies residues 1 to 22; that stretch reads MSSSSLILLFSTLSLFLNVSLA. The helical transmembrane segment at 57-77 threads the bilayer; that stretch reads GIAVVIAVLTAFFSLTFLLLL. Residues 146-188 form an RING-type; atypical zinc finger; sequence CAVCLARFEPTEVLRLLPKCKHAFHVECVDTWLDAHSTCPLCR.

This sequence belongs to the RING-type zinc finger family. ATL subfamily.

The protein resides in the membrane. It catalyses the reaction S-ubiquitinyl-[E2 ubiquitin-conjugating enzyme]-L-cysteine + [acceptor protein]-L-lysine = [E2 ubiquitin-conjugating enzyme]-L-cysteine + N(6)-ubiquitinyl-[acceptor protein]-L-lysine.. Its pathway is protein modification; protein ubiquitination. The chain is RING-H2 finger protein ATL43 (ATL43) from Arabidopsis thaliana (Mouse-ear cress).